The sequence spans 306 residues: UDP-3-O-acyl-N-acetylglucosamine deacetylase (306 aa).

Residues H79, H238, and D242 each contribute to the Zn(2+) site. Residue H265 is the Proton donor of the active site.

Belongs to the LpxC family. It depends on Zn(2+) as a cofactor.

The catalysed reaction is a UDP-3-O-[(3R)-3-hydroxyacyl]-N-acetyl-alpha-D-glucosamine + H2O = a UDP-3-O-[(3R)-3-hydroxyacyl]-alpha-D-glucosamine + acetate. It functions in the pathway glycolipid biosynthesis; lipid IV(A) biosynthesis; lipid IV(A) from (3R)-3-hydroxytetradecanoyl-[acyl-carrier-protein] and UDP-N-acetyl-alpha-D-glucosamine: step 2/6. Catalyzes the hydrolysis of UDP-3-O-myristoyl-N-acetylglucosamine to form UDP-3-O-myristoylglucosamine and acetate, the committed step in lipid A biosynthesis. This is UDP-3-O-acyl-N-acetylglucosamine deacetylase from Shewanella baltica (strain OS223).